The sequence spans 138 residues: Transcription antitermination protein NusB (138 aa).

Belongs to the NusB family.

In terms of biological role, involved in transcription antitermination. Required for transcription of ribosomal RNA (rRNA) genes. Binds specifically to the boxA antiterminator sequence of the ribosomal RNA (rrn) operons. In Leptospira borgpetersenii serovar Hardjo-bovis (strain JB197), this protein is Transcription antitermination protein NusB.